Consider the following 516-residue polypeptide: Protein P54 (516 aa).

The signal sequence occupies residues 1-27; that stretch reads MKKSLLSAVMLSSIALTAVGSPIAAAA. The segment at 208–397 is disordered; that stretch reads ATAEDKKADL…PAPAPAPNPS (190 aa). A compositionally biased stretch (basic and acidic residues) spans 210-236; sequence AEDKKADLNRKKAEAEAEQARIREQAR. 2 stretches are compositionally biased toward low complexity: residues 237–247 and 257–380; these read LAEQARQQAAQ and QAAA…TVTP. Over residues 381–395 the composition is skewed to pro residues; the sequence is APTPTPTPAPAPAPN. A NlpC/P60 domain is found at 399–516; it reads SVNGAAIVAE…WYTPDFAVSM (118 aa). The Nucleophile role is filled by Cys429. Residue His480 is the Proton acceptor of the active site. The active site involves His492.

The protein belongs to the peptidase C40 family.

The protein resides in the secreted. It localises to the cell wall. The polypeptide is Protein P54 (Enterococcus faecium (Streptococcus faecium)).